The primary structure comprises 462 residues: Sugar transporter ERD6-like 12 (462 aa).

The next 12 helical transmembrane spans lie at 25–45 (LLIF…AAIG), 62–82 (LAQF…GAIF), 101–121 (LFCI…WLDM), 124–144 (FLVG…IAEI), 151–171 (GAFT…VYYF), 179–199 (TLAI…FFIP), 262–282 (LTIG…GISS), 297–317 (IGMM…LILV), 326–346 (LMTS…AFGV), 358–378 (IFCF…MGAL), 399–419 (VTIA…FMLV), and 424–444 (GTFI…WCLV).

This sequence belongs to the major facilitator superfamily. Sugar transporter (TC 2.A.1.1) family.

The protein localises to the membrane. Its function is as follows. Sugar transporter. The protein is Sugar transporter ERD6-like 12 (SUGTL5) of Arabidopsis thaliana (Mouse-ear cress).